The sequence spans 728 residues: 1,4-alpha-glucan branching enzyme GlgB (728 aa).

Residue Asp405 is the Nucleophile of the active site. Glu458 acts as the Proton donor in catalysis.

Belongs to the glycosyl hydrolase 13 family. GlgB subfamily. As to quaternary structure, monomer.

The catalysed reaction is Transfers a segment of a (1-&gt;4)-alpha-D-glucan chain to a primary hydroxy group in a similar glucan chain.. It participates in glycan biosynthesis; glycogen biosynthesis. Its function is as follows. Catalyzes the formation of the alpha-1,6-glucosidic linkages in glycogen by scission of a 1,4-alpha-linked oligosaccharide from growing alpha-1,4-glucan chains and the subsequent attachment of the oligosaccharide to the alpha-1,6 position. This Escherichia coli O1:K1 / APEC protein is 1,4-alpha-glucan branching enzyme GlgB.